The chain runs to 463 residues: tRNA (guanine(37)-N(1))-methyltransferase (463 aa).

S-adenosyl-L-methionine-binding positions include histidine 207, 245–246 (DL), 274–275 (DG), and asparagine 305.

This sequence belongs to the class I-like SAM-binding methyltransferase superfamily. TRM5/TYW2 family. In terms of assembly, monomer.

It localises to the mitochondrion matrix. The protein resides in the nucleus. Its subcellular location is the cytoplasm. The enzyme catalyses guanosine(37) in tRNA + S-adenosyl-L-methionine = N(1)-methylguanosine(37) in tRNA + S-adenosyl-L-homocysteine + H(+). Functionally, specifically methylates the N1 position of guanosine-37 in various cytoplasmic and mitochondrial tRNAs. Methylation is not dependent on the nature of the nucleoside 5' of the target nucleoside. This is the first step in the biosynthesis of wybutosine (yW), a modified base adjacent to the anticodon of tRNAs and required for accurate decoding. The protein is tRNA (guanine(37)-N(1))-methyltransferase of Pediculus humanus subsp. corporis (Body louse).